The chain runs to 277 residues: Thiazole synthase (277 aa).

K119 acts as the Schiff-base intermediate with DXP in catalysis. 1-deoxy-D-xylulose 5-phosphate-binding positions include G180, 206–207 (AG), and 228–229 (NT).

The protein belongs to the ThiG family. In terms of assembly, homotetramer. Forms heterodimers with either ThiH or ThiS.

It is found in the plastid. It localises to the chloroplast. The catalysed reaction is [ThiS sulfur-carrier protein]-C-terminal-Gly-aminoethanethioate + 2-iminoacetate + 1-deoxy-D-xylulose 5-phosphate = [ThiS sulfur-carrier protein]-C-terminal Gly-Gly + 2-[(2R,5Z)-2-carboxy-4-methylthiazol-5(2H)-ylidene]ethyl phosphate + 2 H2O + H(+). The protein operates within cofactor biosynthesis; thiamine diphosphate biosynthesis. Catalyzes the rearrangement of 1-deoxy-D-xylulose 5-phosphate (DXP) to produce the thiazole phosphate moiety of thiamine. Sulfur is provided by the thiocarboxylate moiety of the carrier protein ThiS. In vitro, sulfur can be provided by H(2)S. The polypeptide is Thiazole synthase (Porphyra purpurea (Red seaweed)).